The primary structure comprises 276 residues: Phosphate import ATP-binding protein PstB (276 aa).

Positions 23–271 constitute an ABC transporter domain; that stretch reads VNNKNIVYDT…PSDQRTEDYI (249 aa). 62 to 69 contacts ATP; that stretch reads GPSGCGKS.

It belongs to the ABC transporter superfamily. Phosphate importer (TC 3.A.1.7) family. The complex is composed of two ATP-binding proteins (PstB), two transmembrane proteins (PstC and PstA) and a solute-binding protein (PstS).

It localises to the cell membrane. The catalysed reaction is phosphate(out) + ATP + H2O = ADP + 2 phosphate(in) + H(+). In terms of biological role, part of the ABC transporter complex PstSACB involved in phosphate import. Responsible for energy coupling to the transport system. This chain is Phosphate import ATP-binding protein PstB, found in Oceanobacillus iheyensis (strain DSM 14371 / CIP 107618 / JCM 11309 / KCTC 3954 / HTE831).